We begin with the raw amino-acid sequence, 105 residues long: Replication initiation control protein YabA (105 aa).

Residues histidine 79, cysteine 81, cysteine 95, and cysteine 98 each coordinate Zn(2+).

This sequence belongs to the YabA family. In terms of assembly, homotetramer. Interacts with both DnaA and DnaN, acting as a bridge between these two proteins. Zn(2+) is required as a cofactor.

Its subcellular location is the cytoplasm. The protein localises to the nucleoid. In terms of biological role, involved in control of chromosome replication initiation. Inhibits the cooperative binding of DnaA to the oriC region, thus negatively regulating initiation of chromosome replication. Inhibits the ability of DnaA-ATP to form a helix on DNA; does not disassemble preformed DnaA-DNA helices. Decreases the residence time of DnaA on the chromosome at its binding sites (oriC, replication forks and promoter-binding sites). Tethers DnaA to the replication machinery via the DNA polymerase beta sliding clamp subunit (dnaN). Associates with oriC and other DnaA targets on the chromosome in a DnaA-dependent manner. The sequence is that of Replication initiation control protein YabA from Streptococcus sanguinis (strain SK36).